The following is a 126-amino-acid chain: Glycine cleavage system H protein (126 aa).

The Lipoyl-binding domain maps to 21–103 (TVTIGISEHA…YEGGWIVKVK (83 aa)). Lysine 62 is subject to N6-lipoyllysine.

It belongs to the GcvH family. The glycine cleavage system is composed of four proteins: P, T, L and H. (R)-lipoate is required as a cofactor.

Functionally, the glycine cleavage system catalyzes the degradation of glycine. The H protein shuttles the methylamine group of glycine from the P protein to the T protein. The sequence is that of Glycine cleavage system H protein from Vibrio atlanticus (strain LGP32) (Vibrio splendidus (strain Mel32)).